Here is a 483-residue protein sequence, read N- to C-terminus: UDP-N-acetylmuramate--L-alanine ligase (483 aa).

112 to 118 contributes to the ATP binding site; it reads GTHGKTT.

This sequence belongs to the MurCDEF family.

The protein localises to the cytoplasm. It carries out the reaction UDP-N-acetyl-alpha-D-muramate + L-alanine + ATP = UDP-N-acetyl-alpha-D-muramoyl-L-alanine + ADP + phosphate + H(+). The protein operates within cell wall biogenesis; peptidoglycan biosynthesis. In terms of biological role, cell wall formation. The sequence is that of UDP-N-acetylmuramate--L-alanine ligase from Ralstonia pickettii (strain 12J).